We begin with the raw amino-acid sequence, 332 residues long: Anthranilate phosphoribosyltransferase (332 aa).

5-phospho-alpha-D-ribose 1-diphosphate contacts are provided by residues glycine 79, 82 to 83 (GD), serine 87, 89 to 92 (NIST), 107 to 115 (KHGNRSVSS), and serine 119. Position 79 (glycine 79) interacts with anthranilate. Serine 91 provides a ligand contact to Mg(2+). Asparagine 110 is an anthranilate binding site. Arginine 165 provides a ligand contact to anthranilate. Aspartate 223 and glutamate 224 together coordinate Mg(2+).

This sequence belongs to the anthranilate phosphoribosyltransferase family. As to quaternary structure, homodimer. Requires Mg(2+) as cofactor.

It catalyses the reaction N-(5-phospho-beta-D-ribosyl)anthranilate + diphosphate = 5-phospho-alpha-D-ribose 1-diphosphate + anthranilate. Its pathway is amino-acid biosynthesis; L-tryptophan biosynthesis; L-tryptophan from chorismate: step 2/5. Its function is as follows. Catalyzes the transfer of the phosphoribosyl group of 5-phosphorylribose-1-pyrophosphate (PRPP) to anthranilate to yield N-(5'-phosphoribosyl)-anthranilate (PRA). The sequence is that of Anthranilate phosphoribosyltransferase from Sodalis glossinidius (strain morsitans).